Reading from the N-terminus, the 144-residue chain is Ig heavy chain V region M167 (144 aa).

A signal peptide spans 1–19 (MKMWLNWVFLLTLLHGIQC). Positions 20–133 (EVKVVESGGG…GNSYFGYFDV (114 aa)) constitute an Ig-like domain.

In Mus musculus (Mouse), this protein is Ig heavy chain V region M167.